A 72-amino-acid chain; its full sequence is Translation initiation factor IF-1 (72 aa).

Residues 1–72 (MAKEESIEIE…TKGRITYRYK (72 aa)) form the S1-like domain.

This sequence belongs to the IF-1 family. Component of the 30S ribosomal translation pre-initiation complex which assembles on the 30S ribosome in the order IF-2 and IF-3, IF-1 and N-formylmethionyl-tRNA(fMet); mRNA recruitment can occur at any time during PIC assembly.

The protein localises to the cytoplasm. In terms of biological role, one of the essential components for the initiation of protein synthesis. Stabilizes the binding of IF-2 and IF-3 on the 30S subunit to which N-formylmethionyl-tRNA(fMet) subsequently binds. Helps modulate mRNA selection, yielding the 30S pre-initiation complex (PIC). Upon addition of the 50S ribosomal subunit IF-1, IF-2 and IF-3 are released leaving the mature 70S translation initiation complex. This is Translation initiation factor IF-1 from Chlorobium chlorochromatii (strain CaD3).